Consider the following 992-residue polypeptide: UvrABC system protein A (992 aa).

Positions 1-11 are enriched in polar residues; that stretch reads MPKNSSTTVSS. Residues 1–30 form a disordered region; it reads MPKNSSTTVSSAVEAHAGGLASGPGGARSG. 62-69 is an ATP binding site; sequence GLSGSGKS. The C4-type; atypical zinc-finger motif lies at 302-330; it reads CPNGHEQTVDEIEPRSFSFNNPFGACPEC. ABC transporter domains follow at residues 360-639 and 659-988; these read WSLG…TRSV and PEKG…RFLA. Position 692 to 699 (692 to 699) interacts with ATP; that stretch reads GVSGSGKS. A C4-type zinc finger spans residues 791-817; it reads CEACAGDGTLKIEMNFLPDVYVPCEVC.

The protein belongs to the ABC transporter superfamily. UvrA family. In terms of assembly, forms a heterotetramer with UvrB during the search for lesions.

It is found in the cytoplasm. Its function is as follows. The UvrABC repair system catalyzes the recognition and processing of DNA lesions. UvrA is an ATPase and a DNA-binding protein. A damage recognition complex composed of 2 UvrA and 2 UvrB subunits scans DNA for abnormalities. When the presence of a lesion has been verified by UvrB, the UvrA molecules dissociate. The sequence is that of UvrABC system protein A from Micrococcus luteus (Micrococcus lysodeikticus).